A 173-amino-acid chain; its full sequence is Crossover junction endodeoxyribonuclease RuvC (173 aa).

Catalysis depends on residues Asp8, Glu67, and Asp139. Asp8, Glu67, and Asp139 together coordinate Mg(2+).

It belongs to the RuvC family. As to quaternary structure, homodimer which binds Holliday junction (HJ) DNA. The HJ becomes 2-fold symmetrical on binding to RuvC with unstacked arms; it has a different conformation from HJ DNA in complex with RuvA. In the full resolvosome a probable DNA-RuvA(4)-RuvB(12)-RuvC(2) complex forms which resolves the HJ. Mg(2+) serves as cofactor.

The protein localises to the cytoplasm. The catalysed reaction is Endonucleolytic cleavage at a junction such as a reciprocal single-stranded crossover between two homologous DNA duplexes (Holliday junction).. In terms of biological role, the RuvA-RuvB-RuvC complex processes Holliday junction (HJ) DNA during genetic recombination and DNA repair. Endonuclease that resolves HJ intermediates. Cleaves cruciform DNA by making single-stranded nicks across the HJ at symmetrical positions within the homologous arms, yielding a 5'-phosphate and a 3'-hydroxyl group; requires a central core of homology in the junction. The consensus cleavage sequence is 5'-(A/T)TT(C/G)-3'. Cleavage occurs on the 3'-side of the TT dinucleotide at the point of strand exchange. HJ branch migration catalyzed by RuvA-RuvB allows RuvC to scan DNA until it finds its consensus sequence, where it cleaves and resolves the cruciform DNA. In Shewanella amazonensis (strain ATCC BAA-1098 / SB2B), this protein is Crossover junction endodeoxyribonuclease RuvC.